Consider the following 490-residue polypeptide: Cell division cycle protein cdt2 (490 aa).

Positions 18–40 (ITSRANNSLPPTPDSSPAAPSKK) are disordered. WD repeat units follow at residues 178–208 (AHNN…KVFD), 226–257 (YHSH…IFWD), 285–317 (GRDC…KLWD), 339–369 (KRDF…YEYS), 387–419 (RISS…GVVV), and 435–464 (GHTK…RVWN).

The protein belongs to the WD repeat cdt2 family. Component of the DCX(DTL) E3 ubiquitin ligase complex, at least composed of cul4, ddb1, cdt2 and pip1.

The protein resides in the nucleus. It functions in the pathway protein modification; protein ubiquitination. Functionally, substrate-specific adapter of a DCX (DDB1-CUL4-X-box) E3 ubiquitin-protein ligase complex required for DNA replication during mitosis and meiosis. The DCX(DTL) complex, also named CRL4(CDT2) complex, mediates the polyubiquitination and subsequent degradation of cdt1 and spd1. Involved in the regulation of mitotic and pre-meiotic S-phase progression. This chain is Cell division cycle protein cdt2 (cdt2), found in Schizosaccharomyces pombe (strain 972 / ATCC 24843) (Fission yeast).